The primary structure comprises 713 residues: Bifunctional protein gal10 (713 aa).

The segment at 1–350 (MAVQDEYILV…TIENPFGFQI (350 aa)) is galactowaldenase. An NAD(+)-binding site is contributed by 7–38 (YILVTGGAGYIGSHTVIELINHGYKVIIVDNL). A mutarotase region spans residues 351-713 (DNYKWKLFNT…SASYNSGEYY (363 aa)). The For mutarotase activity role is filled by His-532.

This sequence in the N-terminal section; belongs to the NAD(P)-dependent epimerase/dehydratase family. In the C-terminal section; belongs to the aldose epimerase family. Requires NAD(+) as cofactor.

It carries out the reaction UDP-alpha-D-glucose = UDP-alpha-D-galactose. It catalyses the reaction alpha-D-glucose = beta-D-glucose. Its pathway is carbohydrate metabolism; galactose metabolism. It functions in the pathway carbohydrate metabolism; hexose metabolism. Mutarotase converts alpha-aldose to the beta-anomer. It is active on D-glucose, L-arabinose, D-xylose, D-galactose, maltose and lactose. The chain is Bifunctional protein gal10 (gal10) from Schizosaccharomyces pombe (strain 972 / ATCC 24843) (Fission yeast).